A 513-amino-acid chain; its full sequence is MQLNAHEISDLIKKQIEGFDFDAEVRTEGSVVSVSDGIVRIHGLADVQFGEMLEFPNNTFGMALNLEQNSVGAVILGDYLHISEGDVVKCTNRLVEVPVGEAMLGRVVNPLGKAIDGKDDIDVQGARPLEIMAPGVINRKSVDQPIQTGIKAIDAMVPVGRGQRELIIGDRQTGKTAVAIDTIINQKDSGIRCVYVAIGQKDSSVAAVVRKLEEYGALENTIIVTAGAASAPALQYIAPYAGCTMAEYFRDRGEDALIVYDDLTKQAWAYREVSLLLKRPPGREAYPGDVFYLHSRLLERASRVNAEYVEKMTNGEVKGKTGSLTALPIIETQGGDVSAFVPTNVISITDGQIFLETDLFNAGIRPAINAGLSVSRVGGSAQTNIIKKLGGGIRLDLAQYRELAAFAQFSSDLDSETKAQIDRGQRVTELMKQNQYSPLSIAEMATSLFAVNSGLLDDIEVNKVVDFEAALIAYMNANQILLMSKINDTGDYNDKISNELQAAIDDFKQNHTW.

169–176 serves as a coordination point for ATP; that stretch reads GDRQTGKT.

It belongs to the ATPase alpha/beta chains family. As to quaternary structure, F-type ATPases have 2 components, CF(1) - the catalytic core - and CF(0) - the membrane proton channel. CF(1) has five subunits: alpha(3), beta(3), gamma(1), delta(1), epsilon(1). CF(0) has three main subunits: a(1), b(2) and c(9-12). The alpha and beta chains form an alternating ring which encloses part of the gamma chain. CF(1) is attached to CF(0) by a central stalk formed by the gamma and epsilon chains, while a peripheral stalk is formed by the delta and b chains.

The protein resides in the cell inner membrane. It carries out the reaction ATP + H2O + 4 H(+)(in) = ADP + phosphate + 5 H(+)(out). Functionally, produces ATP from ADP in the presence of a proton gradient across the membrane. The alpha chain is a regulatory subunit. This is ATP synthase subunit alpha from Ruthia magnifica subsp. Calyptogena magnifica.